We begin with the raw amino-acid sequence, 310 residues long: ADP-L-glycero-D-manno-heptose-6-epimerase (310 aa).

NADP(+) contacts are provided by residues 10–11, 31–32, Lys38, Lys53, 75–79, and Asn92; these read FI, DN, and EGACS. The active-site Proton acceptor is Tyr140. Lys144 lines the NADP(+) pocket. Residue Asn169 coordinates substrate. NADP(+)-binding residues include Val170 and Lys178. The active-site Proton acceptor is Lys178. Substrate contacts are provided by residues Ser180, His187, 201–204, Arg209, and Tyr272; that span reads FEGS.

The protein belongs to the NAD(P)-dependent epimerase/dehydratase family. HldD subfamily. As to quaternary structure, homopentamer. Requires NADP(+) as cofactor.

It catalyses the reaction ADP-D-glycero-beta-D-manno-heptose = ADP-L-glycero-beta-D-manno-heptose. Its pathway is nucleotide-sugar biosynthesis; ADP-L-glycero-beta-D-manno-heptose biosynthesis; ADP-L-glycero-beta-D-manno-heptose from D-glycero-beta-D-manno-heptose 7-phosphate: step 4/4. In terms of biological role, catalyzes the interconversion between ADP-D-glycero-beta-D-manno-heptose and ADP-L-glycero-beta-D-manno-heptose via an epimerization at carbon 6 of the heptose. The protein is ADP-L-glycero-D-manno-heptose-6-epimerase of Salmonella dublin (strain CT_02021853).